The sequence spans 446 residues: Gasdermin-A (446 aa).

The tract at residues 1–252 (MTMFENVTRA…FILIQASDVG (252 aa)) is triggers pyroptosis. Residue 9-13 (RALAR) participates in a cardiolipin binding. A run of 4 beta stranded transmembrane segments spans residues 78 to 95 (NFSF…DVDV), 99 to 120 (VKVK…TLSV), 164 to 180 (VTLE…SLPF), and 184 to 198 (LGLQ…AVTI).

It belongs to the gasdermin family. In terms of assembly, homooligomer; homooligomeric ring-shaped pore complex containing 18-36 subunits when inserted in the membrane. In terms of processing, cleavage by bacterial SpeB relieves autoinhibition by releasing the N-terminal moiety (Gasdermin-A, N-terminal) that initiates pyroptosis. Palmitoylated. Expressed predominantly in the gastrointestinal (GI) tract and in the skin at a lower level. In the GI tract, the expression is highly restricted to the esophagus and forestomach.

The protein localises to the cytoplasm. Its subcellular location is the perinuclear region. It localises to the cytosol. It is found in the cell membrane. Its activity is regulated as follows. The full-length protein before cleavage is inactive: intramolecular interactions between N- and C-terminal domains mediate autoinhibition in the absence of activation signal. The intrinsic pyroptosis-inducing activity is carried by the released N-terminal moiety (Gasdermin-A, N-terminal) following cleavage by bacterial effector protein SpeB. Its function is as follows. This form constitutes the precursor of the pore-forming protein and acts as a sensor of bacterial infection: upon infection, specifically cleaved by bacterial effector protein SpeB in epithelial cells, releasing the N-terminal moiety (Gasdermin-A, N-terminal) that binds to membranes and forms pores, triggering pyroptosis. In terms of biological role, pore-forming protein that causes membrane permeabilization and pyroptosis. Released upon cleavage by bacterial effector protein SpeB, and binds to membrane inner leaflet lipids. Homooligomerizes within the membrane and forms pores of 10-15 nanometers (nm) of inner diameter, triggering pyroptosis. Pyroptosis triggers the elimination of the infected skin cell, depriving the pathogen of its protective niche, while inducing an inflammatory response. This ultimately prevents bacterial penetration of the epithelial barrier and a subsequent systemic dissemination of the pathogen. Binds to cardiolipin and other acidic phospholipids, such as phosphatidylserine, which mediate its targeting to the inner leaflet membrane. This is Gasdermin-A (Gsdma) from Mus musculus (Mouse).